A 743-amino-acid chain; its full sequence is Serine-rich coiled-coil domain-containing protein 1 (743 aa).

2 disordered regions span residues 1–125 and 156–175; these read MGDS…SRNK and KSEG…SVKQ. Residues 29–56 are compositionally biased toward low complexity; it reads LPSSPSSSNTVGVHSSSPSSTNSSSGST. A compositionally biased stretch (polar residues) spans 81 to 102; that stretch reads EPTNQNLSISNGAQPGQSSMQK. Residues 672–713 are a coiled coil; sequence MKDECSMLKLQLKEKDELISQLQEELEKVQHLQKAFASRVDK.

It belongs to the CCSER family.

The polypeptide is Serine-rich coiled-coil domain-containing protein 1 (CCSER1) (Bos taurus (Bovine)).